Reading from the N-terminus, the 63-residue chain is Large ribosomal subunit protein bL28 (63 aa).

Belongs to the bacterial ribosomal protein bL28 family.

This is Large ribosomal subunit protein bL28 from Dictyoglomus thermophilum (strain ATCC 35947 / DSM 3960 / H-6-12).